Consider the following 457-residue polypeptide: Multidrug resistance protein MdtK (457 aa).

12 helical membrane passes run 11–31 (LLALAIPVVIAQLSQTAMGVV), 46–66 (AVAVGTSIWLPAILFGHGLLL), 93–113 (WLALCVSVLIMLVLYNSDHVI), 127–147 (AVGFLHAIMWGVPGYLFFQVL), 160–180 (GMVIGFVGLLVNIPINYIFIY), 188–208 (LGGVGCGVATASVYWVMFLMM), 243–263 (LPVALALFFEVTLFAVVALLV), 283–301 (LMFMLPMSLSVAATIRVGF), 316–336 (YTSMAVGLLLASVTAVFTIVF), 357–377 (LMLLAALYQLSDAVQVIGSGV), 387–407 (IFFITFTAYWLLGLPSGYLLG), and 418–438 (PAGFWIGFIIGLTAAAILMVL).

It belongs to the multi antimicrobial extrusion (MATE) (TC 2.A.66.1) family. MdtK subfamily.

The protein localises to the cell inner membrane. Functionally, multidrug efflux pump that functions probably as a Na(+)/drug antiporter. This is Multidrug resistance protein MdtK from Yersinia pseudotuberculosis serotype O:1b (strain IP 31758).